Reading from the N-terminus, the 110-residue chain is MAKGTRKPRQPRRVAVRFASRMKGRKKTLWQRRYRGSVKAPNMTMRVRRPLKGTLRKKIRSYATPSKKVKNTREPNCFLRSCAREKLNQSRKRYQNMRQSQRRGQNQKRR.

The tract at residues arginine 80–arginine 110 is disordered.

Its subcellular location is the nucleus. The protein localises to the chromosome. In terms of biological role, involved in nuclear basic protein transition: histones are replaced by spermatid specific proteins which are themselves replaced by protamines in late spermatids. In Ovis aries (Sheep), this protein is Spermatid nuclear transition protein 3.